The sequence spans 475 residues: Ankyrin repeat, SAM and basic leucine zipper domain-containing protein 1 (475 aa).

A disordered region spans residues M1–G24. 3 positions are modified to phosphoserine: S17, S18, and S20. 6 ANK repeats span residues E45–S74, Y78–F107, D110–V144, R148–A177, N181–L210, and D214–G243. The SAM domain occupies S272 to A334.

Interacts with DDX4, PIWIL1, RANBP9 and TDRD1.

It is found in the cytoplasm. Its function is as follows. Plays a central role during spermatogenesis by repressing transposable elements and preventing their mobilization, which is essential for the germline integrity. Acts via the piRNA metabolic process, which mediates the repression of transposable elements during meiosis by forming complexes composed of piRNAs and Piwi proteins and governs the methylation and subsequent repression of transposons. Its association with pi-bodies suggests a participation in the primary piRNAs metabolic process. Required prior to the pachytene stage to facilitate the production of multiple types of piRNAs, including those associated with repeats involved in the regulation of retrotransposons. May act by mediating protein-protein interactions during germ cell maturation. This chain is Ankyrin repeat, SAM and basic leucine zipper domain-containing protein 1 (ASZ1), found in Loxodonta africana (African elephant).